A 284-amino-acid chain; its full sequence is P2R1A-PPP2R2A-interacting phosphatase regulator 1 (284 aa).

Disordered stretches follow at residues 1-32 (MAQE…SNSA), 112-198 (EESL…PIKR), and 235-284 (AHTL…LPID). Low complexity-rich tracts occupy residues 152–164 (SPSL…SSGL) and 172–184 (PTRR…SQSP). Residues 258–269 (STGSPVSLSDSR) are compositionally biased toward polar residues.

The protein belongs to the FAM122 family.

It localises to the nucleus. Its subcellular location is the cytoplasm. Functionally, acts as an inhibitor of serine/threonine-protein phosphatase 2A (PP2A) activity. Potentiates ubiquitin-mediated proteasomal degradation of serine/threonine-protein phosphatase 2A catalytic subunit alpha (PPP2CA). Inhibits PP2A-mediated dephosphorylation of WEE1, promoting ubiquitin-mediated proteolysis of WEE1, thereby releasing G2/M checkpoint. The chain is P2R1A-PPP2R2A-interacting phosphatase regulator 1 from Gallus gallus (Chicken).